A 269-amino-acid polypeptide reads, in one-letter code: Putative ABC transporter ATP-binding protein PF0528 (269 aa).

An ABC transporter domain is found at 6-237 (IVVENLYSSY…EILKRNNLDV (232 aa)). 39 to 46 (GPNGAGKS) is a binding site for ATP.

This sequence belongs to the ABC transporter superfamily.

Its subcellular location is the cell membrane. Its function is as follows. Probably part of an ABC transporter complex. Responsible for energy coupling to the transport system. The polypeptide is Putative ABC transporter ATP-binding protein PF0528 (Pyrococcus furiosus (strain ATCC 43587 / DSM 3638 / JCM 8422 / Vc1)).